Reading from the N-terminus, the 506-residue chain is Acetylcholine receptor subunit gamma (506 aa).

An N-terminal signal peptide occupies residues 1-17 (MVLTLLLIICLALEVRS). Residues 18-235 (ENEEGRLIEK…IIFFLIIQRK (218 aa)) lie on the Extracellular side of the membrane. N-linked (GlcNAc...) asparagine glycosylation is present at Asn85. Cys145 and Cys159 are joined by a disulfide. The next 3 membrane-spanning stretches (helical) occupy residues 236 to 260 (PLFY…VYFL), 269 to 287 (CTLS…FLIA), and 303 to 324 (YLIF…VLNV). The Cytoplasmic portion of the chain corresponds to 325–466 (SLRTPNTHSL…WVLIGKVIDK (142 aa)). Residue Tyr381 is modified to Phosphotyrosine; by Tyr-kinases. Residues 467-490 (ACFWIALLLFSIGTLAIFLTGHFN) form a helical membrane-spanning segment.

It belongs to the ligand-gated ion channel (TC 1.A.9) family. Acetylcholine receptor (TC 1.A.9.1) subfamily. Gamma/CHRNG sub-subfamily. Pentamer of two alpha chains, and one each of the beta, delta, and gamma chains. In terms of processing, seems not to be glycosylated on Asn-158.

It is found in the postsynaptic cell membrane. Its subcellular location is the cell membrane. The enzyme catalyses K(+)(in) = K(+)(out). It carries out the reaction Na(+)(in) = Na(+)(out). After binding acetylcholine, the AChR responds by an extensive change in conformation that affects all subunits and leads to opening of an ion-conducting channel across the plasma membrane. This is Acetylcholine receptor subunit gamma (CHRNG) from Tetronarce californica (Pacific electric ray).